The sequence spans 232 residues: Aspartate/glutamate leucyltransferase (232 aa).

The protein belongs to the R-transferase family. Bpt subfamily.

It localises to the cytoplasm. It catalyses the reaction N-terminal L-glutamyl-[protein] + L-leucyl-tRNA(Leu) = N-terminal L-leucyl-L-glutamyl-[protein] + tRNA(Leu) + H(+). It carries out the reaction N-terminal L-aspartyl-[protein] + L-leucyl-tRNA(Leu) = N-terminal L-leucyl-L-aspartyl-[protein] + tRNA(Leu) + H(+). Functions in the N-end rule pathway of protein degradation where it conjugates Leu from its aminoacyl-tRNA to the N-termini of proteins containing an N-terminal aspartate or glutamate. The polypeptide is Aspartate/glutamate leucyltransferase (Vibrio vulnificus (strain CMCP6)).